A 427-amino-acid chain; its full sequence is ATP-dependent RNA helicase DDX39A (427 aa).

Positions 1-19 (MAEQDVENDLLDYDEEEEP) are enriched in acidic residues. Residues 1–34 (MAEQDVENDLLDYDEEEEPQAPQESTPAPPKKDI) are disordered. A2 carries the post-translational modification N-acetylalanine. K31 participates in a covalent cross-link: Glycyl lysine isopeptide (Lys-Gly) (interchain with G-Cter in SUMO2). Position 35 is an N6-acetyllysine; alternate (K35). K35 participates in a covalent cross-link: Glycyl lysine isopeptide (Lys-Gly) (interchain with G-Cter in SUMO2); alternate. A Phosphoserine modification is found at S37. Positions 44 to 72 (SGFRDFLLKPELLRAIVDCGFEHPSEVQH) match the Q motif motif. In terms of domain architecture, Helicase ATP-binding spans 75 to 248 (IPQAILGMDV…RKFMQDPMEV (174 aa)). 88–95 (AKSGMGKT) is an ATP binding site. Residues K154 and K162 each participate in a glycyl lysine isopeptide (Lys-Gly) (interchain with G-Cter in SUMO2) cross-link. A Phosphothreonine modification is found at T171. The short motif at 195–198 (DECD) is the DECD box element. Glycyl lysine isopeptide (Lys-Gly) (interchain with G-Cter in SUMO2) cross-links involve residues K240 and K255. A Helicase C-terminal domain is found at 260 to 421 (GLQQYYVKLK…ELPEEIDIST (162 aa)). The residue at position 426 (S426) is a Phosphoserine.

This sequence belongs to the DEAD box helicase family. DECD subfamily. Binds ALYREF/THOC4 and DDX39B/BAT1. Interacts with the apo-AREX complex component SARNP. Interacts with MX1. Interacts with MCM3AP isoform GANP. Interacts with ECD. Interacts with PHAX; this interaction stimulates PHAX RNA binding activity. In terms of assembly, (Microbial infection) Interacts with human cytomegalovirus/HHV-5 protein UL69. Post-translationally, SUMOylated by RANBP2; SUMOylation modification affects its ability to bind RNA. As to expression, detected in testis, and at lower levels in brain, kidney, lung, thymus, spleen and salivary gland.

The protein localises to the nucleus. The protein resides in the cytoplasm. It catalyses the reaction ATP + H2O = ADP + phosphate + H(+). Functionally, helicase that plays an essential role in mRNA export and is involved in multiple steps in RNA metabolism including alternative splicing. Regulates nuclear mRNA export to the cytoplasm through association with ECD. Also involved in spliceosomal uridine-rich small nuclear RNA (U snRNA) export by stimulating the RNA binding of adapter PHAX. Plays a role in the negative regulation of type I IFN production by increasing the nuclear retention of antiviral transcripts and thus reducing their protein expression. Independently of the interferon pathway, plays an antiviral role against alphaviruses by binding to a 5' conserved sequence element in the viral genomic RNA. The polypeptide is ATP-dependent RNA helicase DDX39A (DDX39A) (Homo sapiens (Human)).